Consider the following 157-residue polypeptide: 6,7-dimethyl-8-ribityllumazine synthase (157 aa).

5-amino-6-(D-ribitylamino)uracil contacts are provided by residues Phe-22, 56–58 (AME), and 80–82 (AVV). 85–86 (ET) contacts (2S)-2-hydroxy-3-oxobutyl phosphate. His-88 (proton donor) is an active-site residue. Phe-113 contributes to the 5-amino-6-(D-ribitylamino)uracil binding site. Residue Arg-127 coordinates (2S)-2-hydroxy-3-oxobutyl phosphate.

Belongs to the DMRL synthase family.

The enzyme catalyses (2S)-2-hydroxy-3-oxobutyl phosphate + 5-amino-6-(D-ribitylamino)uracil = 6,7-dimethyl-8-(1-D-ribityl)lumazine + phosphate + 2 H2O + H(+). Its pathway is cofactor biosynthesis; riboflavin biosynthesis; riboflavin from 2-hydroxy-3-oxobutyl phosphate and 5-amino-6-(D-ribitylamino)uracil: step 1/2. Its function is as follows. Catalyzes the formation of 6,7-dimethyl-8-ribityllumazine by condensation of 5-amino-6-(D-ribitylamino)uracil with 3,4-dihydroxy-2-butanone 4-phosphate. This is the penultimate step in the biosynthesis of riboflavin. This is 6,7-dimethyl-8-ribityllumazine synthase from Levilactobacillus brevis (strain ATCC 367 / BCRC 12310 / CIP 105137 / JCM 1170 / LMG 11437 / NCIMB 947 / NCTC 947) (Lactobacillus brevis).